The following is a 548-amino-acid chain: Isocitrate dehydrogenase [NAD(+)] 1, mitochondrial (548 aa).

A mitochondrion-targeting transit peptide spans 1–53; it reads MSSLSTLRILHSTAGRRWASYYGIYPKSAACSSSSVAIARFFSTAADRPPKHA. NAD(+) is bound by residues 132-134 and Asn153; that span reads TIT. D-threo-isocitrate contacts are provided by residues 151–157, Arg187, Tyr194, Lys266, Asp311, and Asp335; that span reads SPNGAMR. Asp311, Asp335, and Asp339 together coordinate Mg(2+). Residues 372-377 and Asn391 contribute to the NAD(+) site; that span reads HGTVSD. The 36-residue stretch at 499 to 534 folds into the EF-hand domain; sequence IDEEAINGLFQKYDKNGDGFIDFEEFTRMLVKMNLA. Residues Asp512, Asn514, Asp516, Phe518, and Glu523 each coordinate Ca(2+).

Belongs to the isocitrate and isopropylmalate dehydrogenases family. In terms of assembly, homodimer. Mg(2+) is required as a cofactor. The cofactor is Mn(2+).

It localises to the mitochondrion. The enzyme catalyses D-threo-isocitrate + NAD(+) = 2-oxoglutarate + CO2 + NADH. Its activity is regulated as follows. The homodimer exhibits allosteric regulation by isocitrate. Activated by Mn(2+) and Mg(2+). No activation by Na(+), K(+) or Li(+). Inhibited by Co(2+), Cu(2+) and Ni(2+), but not with Ca(2+) in the presence of Mn(2+) or Mg(2+). Competitively inhibited by NADH, but no effect on activity by 1.0 mM citrate. Strongly inhibited by excess ATP, ADP, AMP and alpha-ketoglutarate. In terms of biological role, performs an essential role in the oxidative function of the tricarboxylic acid cycle and respiration. Catalyzes the decarboxylation of isocitrate to produce 2-oxoglutarate and generate NADH to provide electrons for energy production. No activity with NADP(+). In Phaeodactylum tricornutum (strain CCAP 1055/1), this protein is Isocitrate dehydrogenase [NAD(+)] 1, mitochondrial.